A 222-amino-acid chain; its full sequence is Collectrin (222 aa).

Positions 1–14 (MLWALFFLVTTIHA) are cleaved as a signal peptide. The Extracellular segment spans residues 15–141 (ELCHPDAENA…LAPPMEPSVP (127 aa)). The 202-residue stretch at 21 to 222 (AENAFKVRLS…LTEDERLTPL (202 aa)) folds into the Collectrin-like domain. Asn76 and Asn93 each carry an N-linked (GlcNAc...) asparagine glycan. Residues 142-162 (VWIIVFGVIFCIVTVAIALLV) form a helical membrane-spanning segment. Topologically, residues 163-222 (LSGIRQRRRNNKGPPGVEDAEDKCENIITIENGIPCDPLDMKGGHINDGFLTEDERLTPL) are cytoplasmic. Residues Thr214 and Thr220 each carry the phosphothreonine modification.

It belongs to the CLTRN family. As to quaternary structure, monomer. Homodimer. Homodimer; dimerization prevents CLTRN cleavage by BACE2. Interacts with SNAPIN. Interacts with SLC6A18; this interaction regulates the trafficking of SLC6A18 to the cell membrane and its amino acid transporter activity. Interacts with SLC6A19; this interaction regulates the trafficking of SLC6A19 to the cell membrane and its amino acid transporter activity. Interacts with SLC6A20B. Glycosylated. Glycosylation is required for plasma membrane localization and for its cleavage by BACE2. In terms of processing, proteolytically processed in pancreatic beta cells by BACE2 leading to the generation and extracellular release of soluble CLTRN, and a corresponding cell-associated C-terminal fragment which is later cleaved by gamma-secretase. This shedding process inactivates CLTRN. Three cleavage sites have been identified for BACE2, two clustered sites after Phe-116 and Leu-118 and a more membrane proximal site at Phe-125; the preferred BACE2 cleavage site seems to be between Phe-125 and Leu-126, Phe-116 and Leu-118 act as alternative sites. Expressed on the apical surface of the proximal tubules in the renal cortex (at protein level). Kidney; collecting ducts and proximal tubule. Pancreas; beta cells of islets. Expressed in the cerebral cortex, hippocampus, brainstem and cerebellum.

The protein resides in the cell membrane. Functionally, plays an important role in amino acid transport by acting as binding partner of amino acid transporters SLC6A18 and SLC6A19, regulating their trafficking on the cell surface and their activity. May also play a role in trafficking of amino acid transporters SLC3A1 and SLC7A9 to the renal cortical cell membrane. Regulator of SNARE complex function. Stimulator of beta cell replication. The polypeptide is Collectrin (Mus musculus (Mouse)).